We begin with the raw amino-acid sequence, 354 residues long: 3-isopropylmalate dehydrogenase (354 aa).

The substrate site is built by R96, R106, R132, and D223. 3 residues coordinate Mg(2+): D223, D247, and D251. 283–295 (GSAPDIAGQGKAD) is a binding site for NAD(+).

The protein belongs to the isocitrate and isopropylmalate dehydrogenases family. LeuB type 2 subfamily. As to quaternary structure, homodimer. It depends on Mg(2+) as a cofactor. Requires Mn(2+) as cofactor.

It is found in the cytoplasm. It catalyses the reaction (2R,3S)-3-isopropylmalate + NAD(+) = 4-methyl-2-oxopentanoate + CO2 + NADH. Its pathway is amino-acid biosynthesis; L-leucine biosynthesis; L-leucine from 3-methyl-2-oxobutanoate: step 3/4. Its function is as follows. Catalyzes the oxidation of 3-carboxy-2-hydroxy-4-methylpentanoate (3-isopropylmalate) to 3-carboxy-4-methyl-2-oxopentanoate. The product decarboxylates to 4-methyl-2 oxopentanoate. In Thermobifida fusca (strain YX), this protein is 3-isopropylmalate dehydrogenase.